The chain runs to 367 residues: Riboflavin biosynthesis protein VVA0006 (367 aa).

Position 215-219 (215-219) interacts with GTP; the sequence is RLHSE. 3 residues coordinate Zn(2+): Cys220, Cys231, and Cys233. GTP is bound by residues Gln236, 258-260, and Thr280; that span reads EGR. Asp292 functions as the Proton acceptor in the catalytic mechanism. Arg294 functions as the Nucleophile in the catalytic mechanism. GTP contacts are provided by Thr315 and Lys320.

This sequence in the N-terminal section; belongs to the YbiA family. The protein in the C-terminal section; belongs to the GTP cyclohydrolase II family. Requires Zn(2+) as cofactor.

The catalysed reaction is 2,5-diamino-6-hydroxy-4-(5-phosphoribosylamino)-pyrimidine + H2O = 2,5,6-triamino-4-hydroxypyrimidine + D-ribose 5-phosphate. It catalyses the reaction 5-amino-6-(5-phospho-D-ribosylamino)uracil + H2O = 5,6-diaminouracil + D-ribose 5-phosphate. It carries out the reaction GTP + 4 H2O = 2,5-diamino-6-hydroxy-4-(5-phosphoribosylamino)-pyrimidine + formate + 2 phosphate + 3 H(+). It functions in the pathway cofactor biosynthesis; riboflavin biosynthesis; 5-amino-6-(D-ribitylamino)uracil from GTP: step 1/4. In terms of biological role, catalyzes the hydrolysis of the N-glycosidic bond in the first two intermediates of riboflavin biosynthesis, which are highly reactive metabolites, yielding relatively innocuous products. Thus, can divert a surplus of harmful intermediates into relatively harmless products and pre-empt the damage these intermediates would otherwise do. Has no activity against GTP, nucleoside monophosphates or ADP-ribose. Its function is as follows. Catalyzes the conversion of GTP to 2,5-diamino-6-ribosylamino-4(3H)-pyrimidinone 5'-phosphate (DARP), formate and pyrophosphate. This Vibrio vulnificus (strain YJ016) protein is Riboflavin biosynthesis protein VVA0006.